Here is a 251-residue protein sequence, read N- to C-terminus: 3-deoxy-manno-octulosonate cytidylyltransferase (251 aa).

It belongs to the KdsB family.

It localises to the cytoplasm. The enzyme catalyses 3-deoxy-alpha-D-manno-oct-2-ulosonate + CTP = CMP-3-deoxy-beta-D-manno-octulosonate + diphosphate. It functions in the pathway nucleotide-sugar biosynthesis; CMP-3-deoxy-D-manno-octulosonate biosynthesis; CMP-3-deoxy-D-manno-octulosonate from 3-deoxy-D-manno-octulosonate and CTP: step 1/1. It participates in bacterial outer membrane biogenesis; lipopolysaccharide biosynthesis. Activates KDO (a required 8-carbon sugar) for incorporation into bacterial lipopolysaccharide in Gram-negative bacteria. The polypeptide is 3-deoxy-manno-octulosonate cytidylyltransferase (Agrobacterium fabrum (strain C58 / ATCC 33970) (Agrobacterium tumefaciens (strain C58))).